Here is a 198-residue protein sequence, read N- to C-terminus: tRNA (cytidine(56)-2'-O)-methyltransferase (198 aa).

Residues leucine 81, 110-114 (GAEKV), and 128-135 (IGNQPHSE) each bind S-adenosyl-L-methionine. The segment at 178–198 (DAKQAEASGEGASRKNGQLPS) is disordered.

Belongs to the aTrm56 family. In terms of assembly, homodimer.

It localises to the cytoplasm. The catalysed reaction is cytidine(56) in tRNA + S-adenosyl-L-methionine = 2'-O-methylcytidine(56) in tRNA + S-adenosyl-L-homocysteine + H(+). Functionally, specifically catalyzes the AdoMet-dependent 2'-O-ribose methylation of cytidine at position 56 in tRNAs. This Pyrococcus abyssi (strain GE5 / Orsay) protein is tRNA (cytidine(56)-2'-O)-methyltransferase.